The chain runs to 129 residues: Small ribosomal subunit protein uS9 (129 aa).

This sequence belongs to the universal ribosomal protein uS9 family.

The protein is Small ribosomal subunit protein uS9 of Helicobacter hepaticus (strain ATCC 51449 / 3B1).